The chain runs to 95 residues: Co-chaperonin GroES (95 aa).

The protein belongs to the GroES chaperonin family. As to quaternary structure, heptamer of 7 subunits arranged in a ring. Interacts with the chaperonin GroEL.

The protein localises to the cytoplasm. Its function is as follows. Together with the chaperonin GroEL, plays an essential role in assisting protein folding. The GroEL-GroES system forms a nano-cage that allows encapsulation of the non-native substrate proteins and provides a physical environment optimized to promote and accelerate protein folding. GroES binds to the apical surface of the GroEL ring, thereby capping the opening of the GroEL channel. The polypeptide is Co-chaperonin GroES (Rickettsia bellii (strain RML369-C)).